The sequence spans 333 residues: GTPase Obg (333 aa).

An Obg domain is found at 1–158 (MFIDSAKIYV…RNIDLELKLL (158 aa)). The segment at 121–143 (HGGKGNQHFATPTNRAPRYSEPA) is disordered. The OBG-type G domain maps to 159–323 (ADIGLVGFPN…LKDVLWRIIQ (165 aa)). Residues 165–172 (GFPNAGKS), 190–194 (FTTLE), 212–215 (DIPG), 279–282 (SKMD), and 304–306 (SSV) each bind GTP. Mg(2+) contacts are provided by serine 172 and threonine 192.

Belongs to the TRAFAC class OBG-HflX-like GTPase superfamily. OBG GTPase family. As to quaternary structure, monomer. It depends on Mg(2+) as a cofactor.

The protein resides in the cytoplasm. Its function is as follows. An essential GTPase which binds GTP, GDP and possibly (p)ppGpp with moderate affinity, with high nucleotide exchange rates and a fairly low GTP hydrolysis rate. Plays a role in control of the cell cycle, stress response, ribosome biogenesis and in those bacteria that undergo differentiation, in morphogenesis control. The sequence is that of GTPase Obg from Chloroherpeton thalassium (strain ATCC 35110 / GB-78).